A 187-amino-acid polypeptide reads, in one-letter code: Peptidyl-tRNA hydrolase (187 aa).

Residue Tyr-14 participates in tRNA binding. The active-site Proton acceptor is His-19. Positions 60, 62, and 108 each coordinate tRNA.

Belongs to the PTH family. In terms of assembly, monomer.

It is found in the cytoplasm. It carries out the reaction an N-acyl-L-alpha-aminoacyl-tRNA + H2O = an N-acyl-L-amino acid + a tRNA + H(+). Its function is as follows. Hydrolyzes ribosome-free peptidyl-tRNAs (with 1 or more amino acids incorporated), which drop off the ribosome during protein synthesis, or as a result of ribosome stalling. Catalyzes the release of premature peptidyl moieties from peptidyl-tRNA molecules trapped in stalled 50S ribosomal subunits, and thus maintains levels of free tRNAs and 50S ribosomes. The sequence is that of Peptidyl-tRNA hydrolase from Mycoplasmopsis synoviae (strain 53) (Mycoplasma synoviae).